The sequence spans 1361 residues: Cell migration-inducing and hyaluronan-binding protein (1361 aa).

Positions 1-30 are cleaved as a signal peptide; the sequence is MGAAGRQDFLFKAMLTISWLTLTCFPGATS. Positions 44 to 166 constitute a G8 domain; that stretch reads QPWNPGHDQD…KKLSWTFLNK (123 aa). N-linked (GlcNAc...) asparagine glycosylation is found at Asn-119, Asn-165, Asn-312, Asn-370, and Asn-420. The 142-residue stretch at 176-317 folds into the GG-type lectin 1 domain; that stretch reads GGYFFERSWG…GEYFNVSLSS (142 aa). Positions 295–591 are necessary for its endoplasmic reticulum (ER) retention and interaction with HSPA5; it reads AAARVFKLFQ…IHHTFSRCVT (297 aa). 4 PbH1 repeats span residues 572 to 594, 595 to 617, 719 to 741, and 798 to 819; these read DPPT…TVHG, SNGL…FTED, IPLG…IIDN, and GGDV…TLAS. N-linked (GlcNAc...) asparagine glycosylation is found at Asn-889 and Asn-921. In terms of domain architecture, GG-type lectin 2 spans 1227 to 1361; it reads NDFAYIEVDG…PIPVVKKKKL (135 aa).

The protein belongs to the CEMIP family. In terms of assembly, interacts with EPHA2 and ITPR3. Interacts with HSPA5/BIP; the interaction induces calcium leakage from the endoplasmic reticulum and cell migration. Interacts with clathrin heavy chain/CLTC. In terms of processing, N-glycosylated; glycosylation is not necessary for HA-binding. Expressed in dermal and in synovial fibroblasts. Strongly expressed in gastric cancers compared with the paired normal tissues. Strongly expressed in both ductal carcinoma and invasive breast cancer cells compared with benign epithelial cells (at protein level). Strongly expressed in brain, placenta, prostate, breast, lung and testis. Expressed in fibroblasts, epithelial cells and cancer cells. In ear, it is specifically expressed in inner ear. Expressed in cochlea and vestibule tissues. Strongly expressed in gastric cancers compared with the paired normal tissues. Strongly expressed in colon adenocarcinomas compared with normal colonic mucosas. Strongly expressed in breast cancer as compared to normal breast tissue.

Its subcellular location is the nucleus. The protein resides in the cytoplasm. The protein localises to the endoplasmic reticulum. It is found in the cell membrane. It localises to the membrane. Its subcellular location is the clathrin-coated pit. The protein resides in the secreted. It carries out the reaction Random hydrolysis of (1-&gt;4)-linkages between N-acetyl-beta-D-glucosamine and D-glucuronate residues in hyaluronate.. Activity is up-regulated by histamine. Its function is as follows. Mediates depolymerization of hyaluronic acid (HA) via the cell membrane-associated clathrin-coated pit endocytic pathway. Binds to hyaluronic acid. Hydrolyzes high molecular weight hyaluronic acid to produce an intermediate-sized product, a process that may occur through rapid vesicle endocytosis and recycling without intracytoplasmic accumulation or digestion in lysosomes. Involved in hyaluronan catabolism in the dermis of the skin and arthritic synovium. Positively regulates epithelial-mesenchymal transition (EMT), and hence tumor cell growth, invasion and cancer dissemination. In collaboration with HSPA5/BIP, promotes cancer cell migration in a calcium and PKC-dependent manner. May be involved in hearing. The chain is Cell migration-inducing and hyaluronan-binding protein from Homo sapiens (Human).